The following is a 297-amino-acid chain: MWVRHFPVMGPRSASTVALNDKQHDKKVENGGAAASGGGDGGDEKSVVSYWGVPPSKVTKEDGTEWKWNCFRPWETYKADLSIDLTKHHAPTTFLDKFAYWTVKALRYPTDIFFQRRYGCRAMMLETVAAVPGMVGGMLLHCKSLRRFEQSGGWIKALLEEAENERMHLMTFMEVAKPNWYERALVFAVQGVFINAYFVTYLLSPKLAHRIVGYLEEEAIHSYTEFLKELDKGNIENVPAPAIAIDYWRLPKDSTLRDVVLVVRADEAHHRDVNHFAPDIHYQGQQLKDSPAPIGYH.

The tract at residues 17 to 43 (VALNDKQHDKKVENGGAAASGGGDGGD) is disordered. The helical transmembrane segment at 122 to 142 (AMMLETVAAVPGMVGGMLLHC) threads the bilayer. Residues E126, E165, and H168 each coordinate Fe cation. A helical membrane pass occupies residues 184–204 (ALVFAVQGVFINAYFVTYLLS). 3 residues coordinate Fe cation: E216, E267, and H270.

It belongs to the alternative oxidase family. In terms of assembly, homodimer; disulfide-linked. It depends on Fe cation as a cofactor.

The protein localises to the mitochondrion inner membrane. The catalysed reaction is 2 a ubiquinol + O2 = 2 a ubiquinone + 2 H2O. In terms of biological role, catalyzes the cyanide-resistant oxidation of ubiquinol and the reduction of molecular oxygen to water, but does not translocate protons and consequently is not linked to oxidative phosphorylation. May increase respiration when the cytochrome respiratory pathway is restricted, or in response to low temperatures. The chain is Ubiquinol oxidase 2, mitochondrial (AOX2) from Nicotiana tabacum (Common tobacco).